A 64-amino-acid chain; its full sequence is Large ribosomal subunit protein bL35 (64 aa).

The segment covering 1 to 22 (MPKMKSHTGMGKRVRVTGKGKI) has biased composition (basic residues). The tract at residues 1 to 39 (MPKMKSHTGMGKRVRVTGKGKIVKQQAGLRHNLEKKPST) is disordered.

This sequence belongs to the bacterial ribosomal protein bL35 family.

This Salinispora arenicola (strain CNS-205) protein is Large ribosomal subunit protein bL35.